The sequence spans 250 residues: Coproheme decarboxylase (250 aa).

Residues Arg-131, 145-149, His-172, and Gln-185 contribute to the Fe-coproporphyrin III site; that span reads YPMNK. Tyr-145 is an active-site residue.

This sequence belongs to the ChdC family. Type 1 subfamily. Fe-coproporphyrin III serves as cofactor.

It carries out the reaction Fe-coproporphyrin III + 2 H2O2 + 2 H(+) = heme b + 2 CO2 + 4 H2O. The enzyme catalyses Fe-coproporphyrin III + H2O2 + H(+) = harderoheme III + CO2 + 2 H2O. The catalysed reaction is harderoheme III + H2O2 + H(+) = heme b + CO2 + 2 H2O. It functions in the pathway porphyrin-containing compound metabolism; protoheme biosynthesis. In terms of biological role, involved in coproporphyrin-dependent heme b biosynthesis. Catalyzes the decarboxylation of Fe-coproporphyrin III (coproheme) to heme b (protoheme IX), the last step of the pathway. The reaction occurs in a stepwise manner with a three-propionate intermediate. The sequence is that of Coproheme decarboxylase from Staphylococcus aureus (strain MSSA476).